A 491-amino-acid polypeptide reads, in one-letter code: MAQKTLLIITDGIGYRKDSDHNAFFHAKKPTYDLMFKTLPYSLIDTHGLSVGLPKGQMGNSEVGHMCIGAGRVLYQDLVRISLSLQNDELKNNPAFLNTIQKSHVVHLMGLMSDGGVHSHIEHFIALALECEKSHKKVCLHLITDGRDVAPKSALTYLKQMQNICNENIQIATISGRFYAMDRDNRFERIELAYNSLMGLNHTPLSPSEYIQSQYDKNITDEFIIPACFKNYCGMQDDESFIFINFRNDRAREIVSALGQKEFNSFKRQAFKKLHIATMTPYDNSFPYPVLFPKESVQNTLAEVVSQHNLTQSHIAETEKYAHVTFFINGGVETPFKNENRVLIQSPKVTTYDLKPEMSAKGVTLAVLEQMRLGTDLIIVNFANGDMVGHTGNFEASIKAVEAVDACLGEILSLAKELDYAMLLTSDHGNCERMKDENQNPLTNHTAGSVYCFVLGNGVKSIKNGALNNIASSVLKLMGIKAPATMDEPLF.

Positions 11 and 61 each coordinate Mn(2+). Ser61 serves as the catalytic Phosphoserine intermediate. Residues His118, 147-148 (RD), Arg177, Arg183, 247-250 (RNDR), and Lys320 contribute to the substrate site. Asp386, His390, Asp427, His428, and His445 together coordinate Mn(2+).

This sequence belongs to the BPG-independent phosphoglycerate mutase family. In terms of assembly, monomer. Mn(2+) is required as a cofactor.

It carries out the reaction (2R)-2-phosphoglycerate = (2R)-3-phosphoglycerate. The protein operates within carbohydrate degradation; glycolysis; pyruvate from D-glyceraldehyde 3-phosphate: step 3/5. Functionally, catalyzes the interconversion of 2-phosphoglycerate and 3-phosphoglycerate. This is 2,3-bisphosphoglycerate-independent phosphoglycerate mutase from Helicobacter pylori (strain J99 / ATCC 700824) (Campylobacter pylori J99).